Consider the following 315-residue polypeptide: Probable inactive acetaldehyde dehydrogenase 1 (315 aa).

NAD(+) is bound by residues 14 to 17 (SGDV) and N288.

This sequence belongs to the acetaldehyde dehydrogenase family.

The sequence is that of Probable inactive acetaldehyde dehydrogenase 1 from Mycolicibacterium vanbaalenii (strain DSM 7251 / JCM 13017 / BCRC 16820 / KCTC 9966 / NRRL B-24157 / PYR-1) (Mycobacterium vanbaalenii).